Consider the following 185-residue polypeptide: ATP-dependent protease subunit HslV (185 aa).

Thr12 is a catalytic residue. Positions 168, 171, and 174 each coordinate Na(+).

The protein belongs to the peptidase T1B family. HslV subfamily. In terms of assembly, a double ring-shaped homohexamer of HslV is capped on each side by a ring-shaped HslU homohexamer. The assembly of the HslU/HslV complex is dependent on binding of ATP.

The protein resides in the cytoplasm. The enzyme catalyses ATP-dependent cleavage of peptide bonds with broad specificity.. With respect to regulation, allosterically activated by HslU binding. Its function is as follows. Protease subunit of a proteasome-like degradation complex believed to be a general protein degrading machinery. The polypeptide is ATP-dependent protease subunit HslV (Cereibacter sphaeroides (strain ATCC 17025 / ATH 2.4.3) (Rhodobacter sphaeroides)).